The primary structure comprises 1094 residues: Probable arabinosyltransferase C (1094 aa).

The next 13 membrane-spanning stretches (helical) occupy residues 28–50 (IARY…TPLL), 232–251 (AAMI…LHIL), 264–286 (PARW…WWHF), 341–360 (SIWM…WVIS), 373–392 (TSRA…WLPL), 431–453 (IGAL…LVAI), 466–488 (RFGV…IPIF), 530–552 (SIAR…AMSL), 565–582 (SRRI…MMFT), 586–608 (WTHH…AVAV), 620–642 (TVFA…GWWY), 657–679 (WRWS…AAWF), and 700–722 (LAGI…EVVS). A compositionally biased stretch (low complexity) spans 817 to 831 (GSEPGTEGGTTAAPG). The tract at residues 817-836 (GSEPGTEGGTTAAPGINGSR) is disordered.

It belongs to the emb family.

It is found in the cell membrane. In terms of biological role, arabinosyl transferase responsible for the polymerization of arabinose into the arabinan of arabinogalactan. The polypeptide is Probable arabinosyltransferase C (embC) (Mycobacterium tuberculosis (strain ATCC 25618 / H37Rv)).